The primary structure comprises 314 residues: Oxaloacetate tautomerase FAHD2B, mitochondrial (314 aa).

The transit peptide at 1-84 (MLVSGRRRLL…ATLSVARRAL (84 aa)) directs the protein to the mitochondrion. 3 residues coordinate Mg(2+): E159, E161, and D190.

This sequence belongs to the FAH family. Mg(2+) is required as a cofactor. Requires Mn(2+) as cofactor.

Its subcellular location is the mitochondrion. It catalyses the reaction oxaloacetate = enol-oxaloacetate. Functionally, tautomerase that converts enol-oxaloacetate, a strong inhibitor of succinate dehydrogenase, to the physiological keto form of oxaloacetate. It is thereby required to maximize aerobic respiration efficiency by preventing succinate dehydrogenase inhibition. This Homo sapiens (Human) protein is Oxaloacetate tautomerase FAHD2B, mitochondrial.